A 432-amino-acid chain; its full sequence is Adenosylhomocysteinase (432 aa).

Position 2 is an N-acetylserine (serine 2). Substrate contacts are provided by threonine 57, aspartate 131, and glutamate 156. Residue serine 183 is modified to Phosphoserine. The tract at residues 183 to 350 (SVTKSKFDNL…EGRLVNLGCA (168 aa)) is NAD binding. Substrate contacts are provided by lysine 186 and aspartate 190. Lysine 186 bears the N6-(2-hydroxyisobutyryl)lysine mark. At tyrosine 193 the chain carries Phosphotyrosine.

It belongs to the adenosylhomocysteinase family. In terms of assembly, homotetramer. Interaction with AHCYL1. NAD(+) is required as a cofactor.

The protein resides in the cytoplasm. Its subcellular location is the melanosome. The protein localises to the nucleus. It is found in the endoplasmic reticulum. The catalysed reaction is S-adenosyl-L-homocysteine + H2O = L-homocysteine + adenosine. The protein operates within amino-acid biosynthesis; L-homocysteine biosynthesis; L-homocysteine from S-adenosyl-L-homocysteine: step 1/1. Its function is as follows. Catalyzes the hydrolysis of S-adenosyl-L-homocysteine to form adenosine and homocysteine. Binds copper ions. This chain is Adenosylhomocysteinase (AHCY), found in Bos taurus (Bovine).